A 171-amino-acid chain; its full sequence is MAKRVRVGQIVNTQGVRGQVRLWPLTEKPSRFNEIKRVFVEAPPQGAPEVLTITSAHPLKKLVIVSFQEISDMTQAERLKGCYLTIPVEEVPAPEPDSYYHFQLEGLSVFTEAGERLGQIEEILETGSNDVYVVRQASPPGEVLIPALKSVVLKVDLAAGTMTVRLPDGLR.

The PRC barrel domain occupies Pro96–Leu170.

It belongs to the RimM family. Binds ribosomal protein uS19.

It localises to the cytoplasm. In terms of biological role, an accessory protein needed during the final step in the assembly of 30S ribosomal subunit, possibly for assembly of the head region. Essential for efficient processing of 16S rRNA. May be needed both before and after RbfA during the maturation of 16S rRNA. It has affinity for free ribosomal 30S subunits but not for 70S ribosomes. This Heliobacterium modesticaldum (strain ATCC 51547 / Ice1) protein is Ribosome maturation factor RimM.